Here is a 202-residue protein sequence, read N- to C-terminus: uncharacterized protein (202 aa).

This is an uncharacterized protein from Galliformes (FAdV-1).